Reading from the N-terminus, the 819-residue chain is uncharacterized protein (819 aa).

Transmembrane regions (helical) follow at residues 45-65, 100-120, 135-155, 158-178, 252-272, and 298-318; these read CLFYILSFQWIHDFTLLPIVL, FLLGFFNSFFLSLPFSVIHIL, YTIGGYLIGQLVFLTCVVFGI, VLVPWLTLEPFNYLLGIILLF, YLLGIAIGSVLFSLFWGWVFL, and FVLALALSLTSIPFYSFEYLV.

The protein belongs to the ycf78 family.

The protein localises to the plastid. It localises to the chloroplast membrane. This is an uncharacterized protein from Chlorella vulgaris (Green alga).